The following is a 362-amino-acid chain: 11-beta-hydroxysteroid dehydrogenase B (362 aa).

The helical; Signal-anchor for type II membrane protein transmembrane segment at 10–30 (FVVPPASLLMLAFTWPTLFFI) threads the bilayer. Positions 13-26 (PPASLLMLAFTWPT) match the Proline-knob motif. Position 55-81 (55-81 (GASSGIGEQIAYQYAKRGANLVLVARR)) interacts with NADP(+). Residue serine 185 participates in substrate binding. Catalysis depends on tyrosine 198, which acts as the Proton acceptor. NADP(+) is bound by residues 198–202 (YSAAK) and lysine 202. The interval 321–362 (TGRPLLETSSPRRSAVMEGSSPRRLPPGPLTFSPAFQQQKSE) is disordered.

This sequence belongs to the short-chain dehydrogenases/reductases (SDR) family. Expressed in seeds (at protein level). Not expressed in stem, leaf or root (at protein level).

It is found in the lipid droplet. It localises to the membrane. It catalyses the reaction an 11beta-hydroxysteroid + NADP(+) = an 11-oxosteroid + NADPH + H(+). It carries out the reaction corticosterone + NADP(+) = 11-dehydrocorticosterone + NADPH + H(+). The enzyme catalyses 17beta-estradiol + NADP(+) = estrone + NADPH + H(+). In terms of biological role, has dehydrogenase activity against corticosterone (11 beta-hydroxysteroid) and estradiol (17 beta-hydroxysteroid), with similar activities to both sterols in the presence of NADP(+), but negligible activity to either sterol in the presence of NAD(+). May be involved in signal transduction regulated by various sterols. The chain is 11-beta-hydroxysteroid dehydrogenase B from Sesamum indicum (Oriental sesame).